A 269-amino-acid chain; its full sequence is Ribosomal RNA small subunit methyltransferase J (269 aa).

Residues 125–126 (ER) and Asp-179 each bind S-adenosyl-L-methionine.

The protein belongs to the methyltransferase superfamily. RsmJ family.

The protein localises to the cytoplasm. It carries out the reaction guanosine(1516) in 16S rRNA + S-adenosyl-L-methionine = N(2)-methylguanosine(1516) in 16S rRNA + S-adenosyl-L-homocysteine + H(+). Specifically methylates the guanosine in position 1516 of 16S rRNA. In Pseudomonas syringae pv. syringae (strain B728a), this protein is Ribosomal RNA small subunit methyltransferase J.